We begin with the raw amino-acid sequence, 261 residues long: Non-homologous end joining protein Ku 1 (261 aa).

The region spanning 12-171 (SFSLVAIPVQ…LITLHYSDEV (160 aa)) is the Ku domain.

It belongs to the prokaryotic Ku family. In terms of assembly, homodimer. Interacts with LigD.

Functionally, with LigD forms a non-homologous end joining (NHEJ) DNA repair enzyme, which repairs dsDNA breaks with reduced fidelity. Binds linear dsDNA with 5'- and 3'- overhangs but not closed circular dsDNA nor ssDNA. Recruits and stimulates the ligase activity of LigD. This Geotalea uraniireducens (strain Rf4) (Geobacter uraniireducens) protein is Non-homologous end joining protein Ku 1.